We begin with the raw amino-acid sequence, 70 residues long: Large ribosomal subunit protein bL31 (70 aa).

The Zn(2+) site is built by C16, C18, C37, and C40.

The protein belongs to the bacterial ribosomal protein bL31 family. Type A subfamily. In terms of assembly, part of the 50S ribosomal subunit. Zn(2+) is required as a cofactor.

Binds the 23S rRNA. The polypeptide is Large ribosomal subunit protein bL31 (Shewanella woodyi (strain ATCC 51908 / MS32)).